A 188-amino-acid polypeptide reads, in one-letter code: Large ribosomal subunit protein eL18 (188 aa).

Lysine 119 is covalently cross-linked (Glycyl lysine isopeptide (Lys-Gly) (interchain with G-Cter in SUMO2)). The residue at position 130 (serine 130) is a Phosphoserine. The segment at 151 to 188 (HFGKAPGTPHSHTKPYVRSKGRKFERARGRRASRGYKN) is disordered. Threonine 158 is subject to Phosphothreonine. Basic residues-rich tracts occupy residues 161 to 171 (SHTKPYVRSKG) and 178 to 188 (RGRRASRGYKN). Residue lysine 164 forms a Glycyl lysine isopeptide (Lys-Gly) (interchain with G-Cter in SUMO2) linkage.

Belongs to the eukaryotic ribosomal protein eL18 family. In terms of assembly, component of the large ribosomal subunit.

The protein localises to the cytoplasm. The protein resides in the cytosol. Its subcellular location is the rough endoplasmic reticulum. Functionally, component of the large ribosomal subunit. The ribosome is a large ribonucleoprotein complex responsible for the synthesis of proteins in the cell. The chain is Large ribosomal subunit protein eL18 (RPL18) from Canis lupus familiaris (Dog).